The chain runs to 184 residues: Envelope protein 169 (184 aa).

Topologically, residues 1–6 (MKKYIK) are intravirion. Residues 7–27 (MYLVLLIAIILFITILVIFLI) form a helical membrane-spanning segment. The Virion surface segment spans residues 28–184 (SGLFYPEQNP…TVMAIPRKVL (157 aa)).

The protein belongs to the asfivirus envelope protein p22 family.

It localises to the virion membrane. The protein resides in the host cell membrane. The sequence is that of Envelope protein 169 from Ornithodoros (relapsing fever ticks).